The sequence spans 173 residues: Crossover junction endodeoxyribonuclease RuvC (173 aa).

Residues D8, E67, and D139 contribute to the active site. Mg(2+) is bound by residues D8, E67, and D139.

Belongs to the RuvC family. Homodimer which binds Holliday junction (HJ) DNA. The HJ becomes 2-fold symmetrical on binding to RuvC with unstacked arms; it has a different conformation from HJ DNA in complex with RuvA. In the full resolvosome a probable DNA-RuvA(4)-RuvB(12)-RuvC(2) complex forms which resolves the HJ. It depends on Mg(2+) as a cofactor.

The protein localises to the cytoplasm. It carries out the reaction Endonucleolytic cleavage at a junction such as a reciprocal single-stranded crossover between two homologous DNA duplexes (Holliday junction).. The RuvA-RuvB-RuvC complex processes Holliday junction (HJ) DNA during genetic recombination and DNA repair. Endonuclease that resolves HJ intermediates. Cleaves cruciform DNA by making single-stranded nicks across the HJ at symmetrical positions within the homologous arms, yielding a 5'-phosphate and a 3'-hydroxyl group; requires a central core of homology in the junction. The consensus cleavage sequence is 5'-(A/T)TT(C/G)-3'. Cleavage occurs on the 3'-side of the TT dinucleotide at the point of strand exchange. HJ branch migration catalyzed by RuvA-RuvB allows RuvC to scan DNA until it finds its consensus sequence, where it cleaves and resolves the cruciform DNA. This chain is Crossover junction endodeoxyribonuclease RuvC, found in Shewanella woodyi (strain ATCC 51908 / MS32).